The sequence spans 544 residues: Probable protein kinase UbiB (544 aa).

Positions D123–L500 constitute a Protein kinase domain. ATP contacts are provided by residues L129–V137 and K152. D286 acts as the Proton acceptor in catalysis. A run of 2 helical transmembrane segments spans residues Y499 to S519 and M522 to G542.

Belongs to the ABC1 family. UbiB subfamily.

The protein resides in the cell inner membrane. The protein operates within cofactor biosynthesis; ubiquinone biosynthesis [regulation]. In terms of biological role, is probably a protein kinase regulator of UbiI activity which is involved in aerobic coenzyme Q (ubiquinone) biosynthesis. Required for the expression of 2'-N-acetyltransferase. The polypeptide is Probable protein kinase UbiB (Providencia stuartii).